The sequence spans 157 residues: uncharacterized protein (157 aa).

The region spanning 9-146 is the N-acetyltransferase domain; sequence LLINYKTLDE…GDFYVWHPET (138 aa).

This is an uncharacterized protein from Bacillus cereus (strain AH187).